Here is a 398-residue protein sequence, read N- to C-terminus: Selenide, water dikinase (398 aa).

Positions 1–21 are disordered; that stretch reads MSHKRPQSSAGESNGAVDLKT. Cys46 is a catalytic residue. ATP is bound by residues Lys49, 72–74, Asp97, Asp120, and 171–174; these read GMD and GGQT. Asp74 is a Mg(2+) binding site. Asp120 provides a ligand contact to Mg(2+). Asp278 is a Mg(2+) binding site.

The protein belongs to the selenophosphate synthase 1 family. Class I subfamily. As to quaternary structure, homodimer. It depends on Mg(2+) as a cofactor.

The enzyme catalyses hydrogenselenide + ATP + H2O = selenophosphate + AMP + phosphate + 2 H(+). Functionally, synthesizes selenophosphate from selenide and ATP. The polypeptide is Selenide, water dikinase (Leishmania major).